A 131-amino-acid chain; its full sequence is uncharacterized protein (131 aa).

3 consecutive transmembrane segments (helical) span residues 13 to 35 (RFIKFVFPFPATGIYFHGYTFPI), 60 to 79 (LVALPILMLQPSMYVCTYVC), and 100 to 119 (LFEIVLYYLSVCTPYWWNIT).

It localises to the membrane. This is an uncharacterized protein from Saccharomyces cerevisiae (strain ATCC 204508 / S288c) (Baker's yeast).